Here is a 54-residue protein sequence, read N- to C-terminus: Ovomucoid (54 aa).

The Kazal-like domain maps to 4–54; it reads VDCSDYPKPACTVEYMPLCGSDNKTYDNKCNFCNAVVDSNGTLTLSHFGKC. Intrachain disulfides connect cysteine 6-cysteine 36, cysteine 14-cysteine 33, and cysteine 22-cysteine 54. Asparagine 43 carries an N-linked (GlcNAc...) asparagine glycan.

It is found in the secreted. The sequence is that of Ovomucoid from Anser anser anser (Western greylag goose).